The chain runs to 236 residues: Biosynthetic peptidoglycan transglycosylase (236 aa).

A helical transmembrane segment spans residues 12–31 (ALLWFAAGSVLVVLVLRWVP).

This sequence belongs to the glycosyltransferase 51 family.

The protein resides in the cell inner membrane. The catalysed reaction is [GlcNAc-(1-&gt;4)-Mur2Ac(oyl-L-Ala-gamma-D-Glu-L-Lys-D-Ala-D-Ala)](n)-di-trans,octa-cis-undecaprenyl diphosphate + beta-D-GlcNAc-(1-&gt;4)-Mur2Ac(oyl-L-Ala-gamma-D-Glu-L-Lys-D-Ala-D-Ala)-di-trans,octa-cis-undecaprenyl diphosphate = [GlcNAc-(1-&gt;4)-Mur2Ac(oyl-L-Ala-gamma-D-Glu-L-Lys-D-Ala-D-Ala)](n+1)-di-trans,octa-cis-undecaprenyl diphosphate + di-trans,octa-cis-undecaprenyl diphosphate + H(+). Its pathway is cell wall biogenesis; peptidoglycan biosynthesis. Functionally, peptidoglycan polymerase that catalyzes glycan chain elongation from lipid-linked precursors. This Pseudomonas syringae pv. syringae (strain B728a) protein is Biosynthetic peptidoglycan transglycosylase.